The chain runs to 218 residues: UPF0177 protein YaiF (218 aa).

Transmembrane regions (helical) follow at residues 8 to 28, 48 to 68, 81 to 101, 123 to 143, and 163 to 183; these read SIII…AVFL, FIIL…KCGF, ILLI…VVQF, ILSS…APIL, and FFLS…DILG.

It belongs to the UPF0177 family.

It is found in the cell membrane. The chain is UPF0177 protein YaiF (yaiF) from Lactococcus lactis subsp. lactis (strain IL1403) (Streptococcus lactis).